The primary structure comprises 213 residues: ATP phosphoribosyltransferase (213 aa).

It belongs to the ATP phosphoribosyltransferase family. Short subfamily. In terms of assembly, heteromultimer composed of HisG and HisZ subunits.

The protein localises to the cytoplasm. It carries out the reaction 1-(5-phospho-beta-D-ribosyl)-ATP + diphosphate = 5-phospho-alpha-D-ribose 1-diphosphate + ATP. It functions in the pathway amino-acid biosynthesis; L-histidine biosynthesis; L-histidine from 5-phospho-alpha-D-ribose 1-diphosphate: step 1/9. Catalyzes the condensation of ATP and 5-phosphoribose 1-diphosphate to form N'-(5'-phosphoribosyl)-ATP (PR-ATP). Has a crucial role in the pathway because the rate of histidine biosynthesis seems to be controlled primarily by regulation of HisG enzymatic activity. This chain is ATP phosphoribosyltransferase, found in Anoxybacillus flavithermus (strain DSM 21510 / WK1).